We begin with the raw amino-acid sequence, 397 residues long: Phosphopentomutase (397 aa).

Residues Asp10, Asp296, His301, Asp337, His338, and His349 each coordinate Mn(2+).

Belongs to the phosphopentomutase family. It depends on Mn(2+) as a cofactor.

The protein resides in the cytoplasm. It catalyses the reaction 2-deoxy-alpha-D-ribose 1-phosphate = 2-deoxy-D-ribose 5-phosphate. It carries out the reaction alpha-D-ribose 1-phosphate = D-ribose 5-phosphate. Its pathway is carbohydrate degradation; 2-deoxy-D-ribose 1-phosphate degradation; D-glyceraldehyde 3-phosphate and acetaldehyde from 2-deoxy-alpha-D-ribose 1-phosphate: step 1/2. In terms of biological role, isomerase that catalyzes the conversion of deoxy-ribose 1-phosphate (dRib-1-P) and ribose 1-phosphate (Rib-1-P) to deoxy-ribose 5-phosphate (dRib-5-P) and ribose 5-phosphate (Rib-5-P), respectively. The protein is Phosphopentomutase of Elusimicrobium minutum (strain Pei191).